The sequence spans 621 residues: MPGFYEIVIKVPSDLDGHLPGISDSFVNWVAEKEWELPPDSDMDLNLIEQAPLTVAEKLQRDFLTEWRRVSKAPEALFFVQFEKGESYFHMHVLVETTGVKSMVLGRFLSQIREKLIQRIYRGIEPTLPNWFAVTKTRNGAGGGNKVVDECYIPNYLLPKTQPELQWAWTNMEQYLSACLNLTERKRLVAQHLTHVSQTQEQNKENQNPNSDAPVIRSKTSARYMELVGWLVDKGITSEKQWIQEDQASYISFNAASNSRSQIKAALDNAGKIMSLTKTAPDYLVGQQPVEDISSNRIYKILELNGYDPQYAASVFLGWATKKFGKRNTIWLFGPATTGKTNIAEAIAHTVPFYGCVNWTNENFPFNDCVDKMVIWWEEGKMTAKVVESAKAILGGSKVRVDQKCKSSAQIDPTPVIVTSNTNMCAVIDGNSTTFEHQQPLQDRMFKFELTRRLDHDFGKVTKQEVKDFFRWAKDHVVEVEHEFYVKKGGAKKRPAPSDADISEPKRVRESVAQPSTSDAEASINYADRYQNKCSRHVGMNLMLFPCRQCERMNQNSNICFTHGQKDCLECFPVSESQPVSVVKKAYQKLCYIHHIMGKVPDACTACDLVNVDLDDCIFEQ.

Positions 1–199 constitute a PV NS1-Nuc domain; it reads MPGFYEIVIK…AQHLTHVSQT (199 aa). Positions 83, 90, and 92 each coordinate a divalent metal cation. The RCR-2 motif lies at 90–92; it reads HMH. Tyr-156 acts as the For nuclease activity in catalysis. Residues 156 to 160 carry the RCR-3 motif; the sequence is YLLPK. Over residues 196–211 the composition is skewed to polar residues; it reads VSQTQEQNKENQNPNS. Residues 196–216 are disordered; it reads VSQTQEQNKENQNPNSDAPVI. Residues 308-463 enclose the SF3 helicase domain; the sequence is DPQYAASVFL…LDHDFGKVTK (156 aa). 334 to 341 contributes to the ATP binding site; it reads GPATTGKT. A disordered region spans residues 489–520; it reads GGAKKRPAPSDADISEPKRVRESVAQPSTSDA.

In terms of assembly, hexamer when associated with the viral DNA ori sequence. Interacts with host PRKX. Interacts with host TOPORS. Interacts with host TBP and SUB1/PC4; these interactions play important roles in transcriptional regulation. A divalent metal cation is required as a cofactor.

It is found in the host nucleus. Functionally, plays an essential role in the initiation of viral DNA synthesis. Binds specifically to an inverted terminal repeat element (ITR) on the 3' and 5' ends of the viral DNA, where it cleaves a site specifically to generate a priming site for initiation of the synthesis of a complementary strand. Also plays a role as transcriptional regulator, DNA helicase and as key factors in site-specific integration of the viral genome. Regulates host PKA activity by interacting with host PRKX as a mechanism of interfering with helper virus propagation and promoting its own replication. Inhibits the host cell cycle G1/S, S and G2/M transitions. These arrests may provide essential cellular factors for viral DNA replication. The sequence is that of Protein Rep78 (Rep78) from Adeno-associated virus 2 (isolate Srivastava/1982) (AAV-2).